The chain runs to 396 residues: Ribosomal RNA large subunit methyltransferase I (396 aa).

Residues 2 to 81 (SVRLVLAKGR…ETIDIAFFTR (80 aa)) form the PUA domain.

Belongs to the methyltransferase superfamily. RlmI family.

It localises to the cytoplasm. The enzyme catalyses cytidine(1962) in 23S rRNA + S-adenosyl-L-methionine = 5-methylcytidine(1962) in 23S rRNA + S-adenosyl-L-homocysteine + H(+). In terms of biological role, specifically methylates the cytosine at position 1962 (m5C1962) of 23S rRNA. The polypeptide is Ribosomal RNA large subunit methyltransferase I (Cronobacter sakazakii (strain ATCC BAA-894) (Enterobacter sakazakii)).